A 1405-amino-acid polypeptide reads, in one-letter code: Protein crumbs homolog 1 (1405 aa).

The first 27 residues, 1–27, serve as a signal peptide directing secretion; it reads MKLKRTAYLLFLYLSSSLLICIKNSFC. At 28 to 1339 the chain is on the extracellular side; it reads NKNNTRCLSG…RCELDLADDR (1312 aa). Residues 30-67 enclose the EGF-like 1; atypical domain; sequence NNTRCLSGPCQNNSTCKHFPQDNNCCLDTANNLDKDCE. Disulfide bonds link cysteine 34–cysteine 45, cysteine 39–cysteine 54, cysteine 55–cysteine 66, cysteine 73–cysteine 84, cysteine 78–cysteine 95, cysteine 97–cysteine 106, cysteine 113–cysteine 124, cysteine 118–cysteine 133, cysteine 135–cysteine 144, cysteine 151–cysteine 162, cysteine 156–cysteine 171, cysteine 173–cysteine 182, cysteine 189–cysteine 200, cysteine 194–cysteine 209, cysteine 211–cysteine 220, cysteine 227–cysteine 238, cysteine 232–cysteine 247, cysteine 249–cysteine 258, cysteine 265–cysteine 276, cysteine 270–cysteine 285, cysteine 287–cysteine 297, cysteine 304–cysteine 315, cysteine 309–cysteine 324, cysteine 326–cysteine 335, cysteine 342–cysteine 353, cysteine 347–cysteine 382, cysteine 384–cysteine 393, cysteine 400–cysteine 411, cysteine 405–cysteine 420, cysteine 422–cysteine 437, cysteine 444–cysteine 455, cysteine 449–cysteine 468, and cysteine 470–cysteine 479. Asparagine 41 is a glycosylation site (N-linked (GlcNAc...) asparagine). EGF-like domains are found at residues 69-107 and 109-145; these read LKDPCFSSPCQGIATCVKIPGEGNFLCQCPPGYSGLNCE and ATNSCGGNLCQHGGTCRKDPEHPVCICPPGYAGRFCE. In terms of domain architecture, EGF-like 4; calcium-binding spans 147–183; the sequence is DHNECASSPCHNGAMCQDGINGYSCFCVPGYQGRHCD. In terms of domain architecture, EGF-like 5; calcium-binding spans 185-221; that stretch reads EVDECVSDPCKNEAVCLNEIGRYTCVCPQEFSGVNCE. One can recognise an EGF-like 6; calcium-binding domain in the interval 223–259; the sequence is EIDECRSQPCLHGATCQDAPGGYSCDCAPGFLGEHCE. 5 EGF-like domains span residues 261–298, 300–336, 338–394, 396–438, and 440–480; these read SVNECESQPCLHGGLCVDGRNSYHCDCTGSGFTGMHCE, LIPLCWSKPCHNDATCEDTVDSYICHCRPGYTGALCE, DINE…IHCE, DVDE…ENCS, and ILLG…PLCE. Residues 482–669 form the Laminin G-like 1 domain; the sequence is VTTLSFGSNG…GLSSNVKAGC (188 aa). Residues asparagine 560 and asparagine 656 are each glycosylated (N-linked (GlcNAc...) asparagine). 4 disulfide bridges follow: cysteine 641-cysteine 669, cysteine 675-cysteine 686, cysteine 680-cysteine 695, and cysteine 697-cysteine 706. The EGF-like 12 domain maps to 671–707; it reads GKDWCESQPCQNRGRCINLWQGYQCECDRPYTGSNCL. A Laminin G-like 2 domain is found at 713–884; sequence GRFGQDDSTG…PILVNVTQGC (172 aa). N-linked (GlcNAc...) asparagine glycosylation is found at asparagine 756 and asparagine 879. 6 cysteine pairs are disulfide-bonded: cysteine 850/cysteine 884, cysteine 890/cysteine 901, cysteine 895/cysteine 910, cysteine 912/cysteine 921, cysteine 927/cysteine 938, and cysteine 932/cysteine 947. EGF-like domains follow at residues 886–922 and 923–959; these read GDNTCKSNPCHNGGVCHSLWDDFSCSCPTNTAGRACE and QVQWCQLSPCPPTAECQLLPQGFECIANAVFSGLSRE. Residues 950-1136 enclose the Laminin G-like 3 domain; sequence NAVFSGLSRE…VSTNMVLTGC (187 aa). N-linked (GlcNAc...) asparagine glycans are attached at residues asparagine 967, asparagine 974, and asparagine 999. 16 disulfide bridges follow: cysteine 1095/cysteine 1136, cysteine 1142/cysteine 1153, cysteine 1147/cysteine 1162, cysteine 1164/cysteine 1173, cysteine 1180/cysteine 1190, cysteine 1185/cysteine 1199, cysteine 1201/cysteine 1210, cysteine 1217/cysteine 1228, cysteine 1222/cysteine 1237, cysteine 1239/cysteine 1248, cysteine 1258/cysteine 1273, cysteine 1267/cysteine 1282, cysteine 1284/cysteine 1293, cysteine 1300/cysteine 1311, cysteine 1305/cysteine 1320, and cysteine 1322/cysteine 1331. The EGF-like 15 domain maps to 1138 to 1174; the sequence is PSNACHSSPCLHGGNCEDSYSSYRCACLSGWSGTHCE. The EGF-like 16; calcium-binding domain occupies 1176–1211; sequence NIDECFSSPCIHGNCSDGVAAYHCRCEPGYTGVNCE. A glycan (N-linked (GlcNAc...) asparagine) is linked at asparagine 1189. 2 EGF-like domains span residues 1213 to 1249 and 1254 to 1294; these read DVDNCKSHQCANGATCVPEAHGYSCLCFGNFTGRFCR and PSTV…EWCE. N-linked (GlcNAc...) asparagine glycosylation is found at asparagine 1242 and asparagine 1264. An EGF-like 19; calcium-binding domain is found at 1296-1332; the sequence is DINECASDPCINGGLCRDLVNRFLCICDVAFAGERCE. The chain crosses the membrane as a helical span at residues 1340–1360; the sequence is LLGIFTAVGSGTLALFFILLL. The Cytoplasmic portion of the chain corresponds to 1361–1405; sequence AGVASLIASNKRATQGTYSPSGQEKAGPRVEMWIRMPPPALERLI.

Belongs to the Crumbs protein family. In terms of assembly, component of a complex composed of PALS1, CRB1 and EPB41L5. Within the complex, interacts (via intracellular domain) with PALS1 and EPB41L5 (via FERM domain). Forms a complex with MPP4 and PALS1. Interacts with MPDZ/MUPP1 and MPP4. Post-translationally, glycosylated. In terms of tissue distribution, expressed in the kidney, lung, stomach and testis. Expressed in the brain. Expressed in the retina of the eye. Expressed in the outer nuclear layer, photoreceptor layer and inner nuclear layer of the retina. Expressed in Mueller cell radial processes in the inner nuclear layer, in apical processes sclerad to the external limiting membrane, and in the subapical region, adjacent to the adherens junction of retinal photoreceptors. In the brain, expressed in the granular layer of the cerebellum, the hippocampal dentate gyrus, the olfactory bulbs, the subventricular region lining the telencephalic ventricles and the rostral migratory stream. As to expression, ubiquitously expressed.

It is found in the apical cell membrane. The protein resides in the secreted. Its subcellular location is the cell projection. It localises to the cilium. The protein localises to the photoreceptor outer segment. It is found in the photoreceptor inner segment. The protein resides in the cytoplasm. Its subcellular location is the cell junction. It localises to the focal adhesion. Plays a role in photoreceptor morphogenesis in the retina. May maintain cell polarization and adhesion. In terms of biological role, may play a role in epidermal tissue morphogenesis. May function in cell attachment for stratified epithelial organization. The protein is Protein crumbs homolog 1 (Crb1) of Mus musculus (Mouse).